The chain runs to 297 residues: Protoheme IX farnesyltransferase (297 aa).

A run of 8 helical transmembrane segments spans residues 15–35 (VVAL…PAPY), 39–59 (GLLV…AAVF), 91–111 (VWGV…VNII), 112–132 (TVVL…LYLK), 139–159 (IVIG…AVSG), 166–186 (ACLL…ALAI), 220–240 (LLLV…YLVI), and 265–285 (AWST…ALLF).

Belongs to the UbiA prenyltransferase family. Protoheme IX farnesyltransferase subfamily.

Its subcellular location is the cell inner membrane. The enzyme catalyses heme b + (2E,6E)-farnesyl diphosphate + H2O = Fe(II)-heme o + diphosphate. Its pathway is porphyrin-containing compound metabolism; heme O biosynthesis; heme O from protoheme: step 1/1. Converts heme B (protoheme IX) to heme O by substitution of the vinyl group on carbon 2 of heme B porphyrin ring with a hydroxyethyl farnesyl side group. The chain is Protoheme IX farnesyltransferase from Vesicomyosocius okutanii subsp. Calyptogena okutanii (strain HA).